We begin with the raw amino-acid sequence, 144 residues long: Large ribosomal subunit protein uL15 (144 aa).

Residues 1–52 (MRLNTLSPAEGAKHAPKRVGRGIGSGLGKTGGRGHKGQKSRSGGGVRRGFEG) are disordered. Over residues 21 to 31 (RGIGSGLGKTG) the composition is skewed to gly residues.

This sequence belongs to the universal ribosomal protein uL15 family. In terms of assembly, part of the 50S ribosomal subunit.

In terms of biological role, binds to the 23S rRNA. The sequence is that of Large ribosomal subunit protein uL15 from Buchnera aphidicola subsp. Acyrthosiphon kondoi (Acyrthosiphon kondoi symbiotic bacterium).